Here is a 279-residue protein sequence, read N- to C-terminus: Thymidylate synthase (279 aa).

133–134 (RR) serves as a coordination point for dUMP. Cys-154 acts as the Nucleophile in catalysis. DUMP contacts are provided by residues 178–181 (RSND), Asn-189, and 219–221 (HIY). Residue Asp-181 participates in (6R)-5,10-methylene-5,6,7,8-tetrahydrofolate binding. A (6R)-5,10-methylene-5,6,7,8-tetrahydrofolate-binding site is contributed by Ala-278.

Belongs to the thymidylate synthase family. Bacterial-type ThyA subfamily. As to quaternary structure, homodimer.

Its subcellular location is the cytoplasm. The catalysed reaction is dUMP + (6R)-5,10-methylene-5,6,7,8-tetrahydrofolate = 7,8-dihydrofolate + dTMP. Its pathway is pyrimidine metabolism; dTTP biosynthesis. In terms of biological role, catalyzes the reductive methylation of 2'-deoxyuridine-5'-monophosphate (dUMP) to 2'-deoxythymidine-5'-monophosphate (dTMP) while utilizing 5,10-methylenetetrahydrofolate (mTHF) as the methyl donor and reductant in the reaction, yielding dihydrofolate (DHF) as a by-product. This enzymatic reaction provides an intracellular de novo source of dTMP, an essential precursor for DNA biosynthesis. In Streptococcus sanguinis (strain SK36), this protein is Thymidylate synthase.